Reading from the N-terminus, the 302-residue chain is Acidic endochitinase (302 aa).

A signal peptide spans 1–30; sequence MTNMTLRKHVIYFLFFISCSLSKPSDASRG. Residues 31-302 form the GH18 domain; the sequence is GIAIYWGQNG…GYSSSILASV (272 aa). Intrachain disulfides connect Cys49/Cys96 and Cys79/Cys86. The active-site Proton donor is Glu156. Cys188 and Cys217 are oxidised to a cystine.

The protein belongs to the glycosyl hydrolase 18 family. Chitinase class III subfamily.

Its subcellular location is the secreted. It localises to the extracellular space. It carries out the reaction Random endo-hydrolysis of N-acetyl-beta-D-glucosaminide (1-&gt;4)-beta-linkages in chitin and chitodextrins.. In terms of biological role, this protein functions as a defense against chitin containing fungal pathogens. The chain is Acidic endochitinase (CHIB1) from Arabidopsis thaliana (Mouse-ear cress).